Here is a 1086-residue protein sequence, read N- to C-terminus: Phosphinothricin tripeptide synthetase PhsC (1086 aa).

The disordered stretch occupies residues 22–43; it reads RLRAAAAPGPDPAIPRRPDDDG. Positions 45–484 are condensation; sequence VPLSFAQHRL…LAALPVLTRD (440 aa). The segment at 510 to 901 is adenylation; sequence LEDSARRHPD…GRTDHQVKLR (392 aa). A disordered region spans residues 983–1007; it reads GKLDREALPDPLAQSGDTAGNRPPL. Residues 1006 to 1081 enclose the Carrier domain; that stretch reads PLLDPVEERI…GLARSVSAER (76 aa). Serine 1041 is modified (O-(pantetheine 4'-phosphoryl)serine).

It belongs to the NRP synthetase family. Pantetheine 4'-phosphate serves as cofactor.

It catalyses the reaction holo-[peptidyl-carrier protein] + L-alanine + ATP = L-alanyl-[peptidyl-carrier protein] + AMP + diphosphate. The protein operates within secondary metabolite biosynthesis; bialaphos biosynthesis. Its function is as follows. Involved in the biosynthesis of phosphinothricin tripeptide (PTT), also known as bialaphos (BA), a natural-product antibiotic and potent herbicide. Adenylates L-alanine and loads it onto a peptidyl carrier domain via a thioester linkage to the phosphopanthetheine moiety. Shows weaker activity with aminobutyric acid and L-serine. This chain is Phosphinothricin tripeptide synthetase PhsC, found in Streptomyces viridochromogenes (strain DSM 40736 / JCM 4977 / BCRC 1201 / Tue 494).